A 79-amino-acid chain; its full sequence is Conotoxin ArMSGL-0122 (79 aa).

The N-terminal stretch at 1-20 is a signal peptide; sequence MSRLGIMVLTLLLLVFIVTS. A propeptide spanning residues 21–44 is cleaved from the precursor; the sequence is HQDAGEKQATQRAAINFRWKRSLT. 3 disulfide bridges follow: Cys52–Cys64, Cys56–Cys73, and Cys63–Cys77. Leucine amide is present on Leu78.

The protein belongs to the conotoxin O3 superfamily. As to expression, expressed by the venom duct.

It is found in the secreted. The polypeptide is Conotoxin ArMSGL-0122 (Conus arenatus (Sand-dusted cone)).